The chain runs to 865 residues: Fanconi-associated nuclease 1 homolog (865 aa).

A UBZ4-type zinc finger spans residues 35 to 62; sequence GKICPLCETKFSLASYKSHMNTCNVADD. Positions 38, 41, 53, and 57 each coordinate Zn(2+). 2 disordered regions span residues 90 to 140 and 162 to 187; these read DASF…SLDV and RRSS…PVKK. Composition is skewed to basic and acidic residues over residues 93–112 and 174–187; these read FSDK…REVP and DQAD…PVKK. Mn(2+) is bound by residues E682, D810, E825, and V826. One can recognise a VRR-NUC domain in the interval 744 to 857; the sequence is QELIEENIRK…GIRAEVCHVA (114 aa).

Belongs to the FAN1 family. It depends on Mn(2+) as a cofactor. The cofactor is Mg(2+).

It localises to the nucleus. The enzyme catalyses Hydrolytically removes 5'-nucleotides successively from the 3'-hydroxy termini of 3'-hydroxy-terminated oligonucleotides.. Its function is as follows. Nuclease required for the repair of DNA interstrand cross-links (ICL). Acts as a 5'-3' exonuclease that anchors at a cut end of DNA and cleaves DNA successively at every third nucleotide, allowing to excise an ICL from one strand through flanking incisions. In Caenorhabditis elegans, this protein is Fanconi-associated nuclease 1 homolog (fan-1).